The chain runs to 182 residues: Putative CTD phosphatase-like protein 355R (182 aa).

The region spanning 1 to 180 is the FCP1 homology domain; sequence MKNIFLDLDN…MRLKDVLNRH (180 aa).

The protein belongs to the IIV-6 355R family.

Its function is as follows. May function as a phosphatase. The protein is Putative CTD phosphatase-like protein 355R of Invertebrate iridescent virus 6 (IIV-6).